The primary structure comprises 511 residues: Maturase K (511 aa).

Belongs to the intron maturase 2 family. MatK subfamily.

It localises to the plastid. The protein resides in the chloroplast. Its function is as follows. Usually encoded in the trnK tRNA gene intron. Probably assists in splicing its own and other chloroplast group II introns. This is Maturase K from Psathyrostachys juncea (Russian wildrye).